The primary structure comprises 391 residues: 2,4,6-trihydroxybenzophenone synthase (391 aa).

Residue C165 is part of the active site.

The protein belongs to the thiolase-like superfamily. Chalcone/stilbene synthases family. In terms of assembly, homodimer. Expressed in young fruit pericarp.

The enzyme catalyses benzoyl-CoA + 3 malonyl-CoA + 2 H(+) = 2,4,6-trihydroxybenzophenone + 3 CO2 + 4 CoA. Functionally, type III polyketide synthase involved in the biosynthesis of benzophenones and xanthones. Produces mainly 2,4,6-trihydroxybenzophenone together with minor amounts of tetraketide lactone, triketide lactone and diketide lactone. The preferred substrate is benzoyl-CoA, but can also use acetyl-CoA, phenylacetyl-CoA, hexanoyl-CoA, cinnamoyl-CoA, p-coumaroyl-CoA and salicoyl-CoA. This is 2,4,6-trihydroxybenzophenone synthase (BPS) from Garcinia mangostana (Mangosteen).